We begin with the raw amino-acid sequence, 405 residues long: Argininosuccinate synthase (405 aa).

Residues 11-19 and Ala-38 contribute to the ATP site; that span reads AYSGGLDTS. The L-citrulline site is built by Tyr-91 and Ser-96. Gly-121 lines the ATP pocket. 3 residues coordinate L-aspartate: Thr-123, Asn-127, and Asp-128. Residue Asn-127 participates in L-citrulline binding. 5 residues coordinate L-citrulline: Arg-131, Ser-182, Ser-191, Glu-267, and Tyr-279.

It belongs to the argininosuccinate synthase family. Type 1 subfamily. In terms of assembly, homotetramer.

The protein localises to the cytoplasm. It carries out the reaction L-citrulline + L-aspartate + ATP = 2-(N(omega)-L-arginino)succinate + AMP + diphosphate + H(+). It functions in the pathway amino-acid biosynthesis; L-arginine biosynthesis; L-arginine from L-ornithine and carbamoyl phosphate: step 2/3. In Sphingopyxis alaskensis (strain DSM 13593 / LMG 18877 / RB2256) (Sphingomonas alaskensis), this protein is Argininosuccinate synthase.